We begin with the raw amino-acid sequence, 336 residues long: Terephthalate 1,2-dioxygenase, reductase component 2 (336 aa).

The 2Fe-2S ferredoxin-type domain maps to 3-91 (HQIHIHDSDI…DIRIHPSSFR (89 aa)). The [2Fe-2S] cluster site is built by Cys37, Cys42, Cys45, and Cys75. An FAD-binding FR-type domain is found at 98-197 (RKRFTAKVYS…ELPFGSIALK (100 aa)).

Monomer. Part of a multicomponent enzyme system composed of a reductase (TphA1I or TphA1II) and a two-subunit oxygenase component (TphA2I or TphA2II and TphA3I or TphA3II). FAD is required as a cofactor. Requires [2Fe-2S] cluster as cofactor.

The enzyme catalyses terephthalate + NADH + O2 + H(+) = (3S,4R)-3,4-dihydroxycyclohexa-1,5-diene-1,4-dicarboxylate + NAD(+). Functionally, component of the terephthalate 1,2-dioxygenase multicomponent enzyme system which catalyzes the dioxygenation of terephthalate (TER/TPA) to 1,2-dihydroxy-3,5-cyclohexadiene-1,4-dicarboxylic acid (DCD). TphA1 probably reduces TphA2A3. It can also use 2,5-dicarboxypyridine (PDC) and 1,4-napthalenedicarboxylic acid (NDC) as substrates, and preferentially uses NADPH which is the physiological electron donor. The sequence is that of Terephthalate 1,2-dioxygenase, reductase component 2 (tphA1II) from Comamonas sp.